Here is a 116-residue protein sequence, read N- to C-terminus: MNLITTIITITITLSAVLATISFWLPQISPDAEKLSPYECGFDPLGSARLPFSLRFFLIAILFLLFDLEIALLLPLPWGDQLDTPTLTLIWSTAVLALLTLGLIYEWTQGGLEWAE.

3 consecutive transmembrane segments (helical) span residues 3-23 (LITT…TISF), 56-76 (FFLI…LLPL), and 87-107 (LTLI…IYEW).

Belongs to the complex I subunit 3 family.

The protein localises to the mitochondrion membrane. The catalysed reaction is a ubiquinone + NADH + 5 H(+)(in) = a ubiquinol + NAD(+) + 4 H(+)(out). Core subunit of the mitochondrial membrane respiratory chain NADH dehydrogenase (Complex I) that is believed to belong to the minimal assembly required for catalysis. Complex I functions in the transfer of electrons from NADH to the respiratory chain. The immediate electron acceptor for the enzyme is believed to be ubiquinone. In Oncorhynchus tshawytscha (Chinook salmon), this protein is NADH-ubiquinone oxidoreductase chain 3 (MT-ND3).